A 607-amino-acid polypeptide reads, in one-letter code: Heterocyst differentiation ATP-binding protein HepA (607 aa).

The ABC transmembrane type-1 domain occupies 32 to 330; the sequence is AILAVIFSFL…INGTVAFLST (299 aa). A run of 5 helical transmembrane segments spans residues 33–53, 77–97, 163–182, 186–208, and 290–310; these read ILAV…IGFL, ILAA…LILL, FSGL…YFVV, ISWQ…LSTL, and IVIS…FFFV. Positions 364–598 constitute an ABC transporter domain; sequence IDLVSVDFGY…RGKLWKYHQM (235 aa). Position 397–404 (397–404) interacts with ATP; sequence GASGAGKT.

This sequence belongs to the ABC transporter superfamily.

It localises to the cell inner membrane. Acts early in the process of morphological differentiation of heterocysts. This chain is Heterocyst differentiation ATP-binding protein HepA (hepA), found in Nostoc sp. (strain PCC 7120 / SAG 25.82 / UTEX 2576).